The following is an 840-amino-acid chain: Leucine--tRNA ligase (840 aa).

Positions 44 to 55 (PYPSANGLHVGH) match the 'HIGH' region motif. The short motif at 617–621 (KMSKS) is the 'KMSKS' region element. ATP is bound at residue Lys-620.

This sequence belongs to the class-I aminoacyl-tRNA synthetase family.

It localises to the cytoplasm. It catalyses the reaction tRNA(Leu) + L-leucine + ATP = L-leucyl-tRNA(Leu) + AMP + diphosphate. The chain is Leucine--tRNA ligase from Borreliella afzelii (strain PKo) (Borrelia afzelii).